The following is a 324-amino-acid chain: Quinolinate synthase 2 (324 aa).

Positions 48 and 66 each coordinate iminosuccinate. Cys-111 is a binding site for [4Fe-4S] cluster. Residues 137-139 (YVN) and Ser-154 each bind iminosuccinate. A [4Fe-4S] cluster-binding site is contributed by Cys-196. Iminosuccinate-binding positions include 222–224 (HPE) and Thr-239. A [4Fe-4S] cluster-binding site is contributed by Cys-282.

It belongs to the quinolinate synthase family. Type 2 subfamily. It depends on [4Fe-4S] cluster as a cofactor.

It localises to the cytoplasm. The enzyme catalyses iminosuccinate + dihydroxyacetone phosphate = quinolinate + phosphate + 2 H2O + H(+). Its pathway is cofactor biosynthesis; NAD(+) biosynthesis; quinolinate from iminoaspartate: step 1/1. Functionally, catalyzes the condensation of iminoaspartate with dihydroxyacetone phosphate to form quinolinate. The chain is Quinolinate synthase 2 from Mesorhizobium japonicum (strain LMG 29417 / CECT 9101 / MAFF 303099) (Mesorhizobium loti (strain MAFF 303099)).